A 583-amino-acid polypeptide reads, in one-letter code: Putative glutaminase 3 (583 aa).

A disordered region spans residues 1–29; the sequence is MDNKEKEDEELSDELKDQPGPSEKPRTPT. Substrate is bound by residues serine 216, asparagine 265, glutamate 311, asparagine 318, tyrosine 344, tyrosine 396, and valine 414. ANK repeat units follow at residues 482-514, 515-548, and 549-581; these read DGQNRFMYATKLGDIAAIKRFLLMGHDIHCKDY, DDRTVLHVAAAEGDVVTLEYVLSKWQEDPNPCDR, and YDRTPLDDAKHFNHTACVKLLEEAITVYNLKGQ.

Belongs to the glutaminase family.

It carries out the reaction L-glutamine + H2O = L-glutamate + NH4(+). In Caenorhabditis elegans, this protein is Putative glutaminase 3 (glna-3).